The sequence spans 965 residues: Collagenase ColQ1 (965 aa).

The N-terminal stretch at 1-30 (MNKKSKINKVMLSISTMALSLGALQAPASA) is a signal peptide. A propeptide spanning residues 31 to 93 (EEKVPYNVLK…KAAVKQVKES (63 aa)) is cleaved from the precursor. Residues 94-366 (YSMADLNKMN…AVEQITTNYN (273 aa)) are activator domain. An S1 metalloprotease domain region spans residues 94–765 (YSMADLNKMN…VFHGIAKDDG (672 aa)). The tract at residues 376–645 (DLEKIRKEGK…MQQLIDNQDK (270 aa)) is catalytic subdomain. His501 contacts Zn(2+). Glu502 is a catalytic residue. 2 residues coordinate Zn(2+): His505 and Glu533. A helper subdomain region spans residues 653–765 (DDYLAEHAPK…VFHGIAKDDG (113 aa)). One can recognise a PKD domain in the interval 769–850 (APTVNINGPY…ESKSETTVTV (82 aa)). Residues 842–867 (SKSETTVTVKDGSLTESEPNNRPEEA) form a disordered region. Residues 845–859 (ETTVTVKDGSLTESE) show a composition bias toward polar residues. The collagen-binding domain stretch occupies residues 853–965 (GSLTESEPNN…GDGTYKLSVK (113 aa)).

The protein belongs to the peptidase M9B family. Collagenase subfamily. Ca(2+) is required as a cofactor. It depends on Zn(2+) as a cofactor.

The protein resides in the secreted. It catalyses the reaction Digestion of native collagen in the triple helical region at Xaa-|-Gly bonds. With synthetic peptides, a preference is shown for Gly at P3 and P1', Pro and Ala at P2 and P2', and hydroxyproline, Ala or Arg at P3'.. Strongly inhibited by EDTA. Not inhibited by E-64 and PMSF, broad-spectrum cysteine and serine protease inhibitors. Its function is as follows. Acts as a true collagenase, which is highly active and cleaves natively folded collagen. In vitro, can also cleave gelatin and the synthetic peptide FALGPA (furylacryloyl-Leu-Gly-Pro-Ala). Causes damage on dermal collagen (COL), resulting in gaps in the tissue, which might lead to an accelerated bacterial infiltration and penetration into deeper sites of the host. The protein is Collagenase ColQ1 of Bacillus cereus (strain Q1).